The sequence spans 360 residues: GDSL esterase/lipase At2g31550 (360 aa).

The signal sequence occupies residues 1-27; that stretch reads MSTSKAITLTLFITTTLLASCDAAANA. N26 carries an N-linked (GlcNAc...) asparagine glycan. The active-site Nucleophile is the S42. Residues N104 and N326 are each glycosylated (N-linked (GlcNAc...) asparagine). Catalysis depends on residues D334 and H337.

The protein belongs to the 'GDSL' lipolytic enzyme family.

It localises to the secreted. The polypeptide is GDSL esterase/lipase At2g31550 (Arabidopsis thaliana (Mouse-ear cress)).